We begin with the raw amino-acid sequence, 612 residues long: uncharacterized protein (612 aa).

5 disordered regions span residues 46 to 113, 129 to 185, 313 to 360, 457 to 488, and 593 to 612; these read QQPQ…MVTP, QQYQ…TPTY, TKDG…GSTM, FSISGGGGSGGIPSQSGIIKKHKKPSGSSGYG, and NNTNNTNNTNNTNNNTVVTI. Residues 58–102 are compositionally biased toward low complexity; the sequence is HQQIPISTQSTPNSTSSTTTTTTTTTSTTTAPTSNSKKSKTTPSN. Polar residues-rich tracts occupy residues 103-113 and 129-138; these read GNKPTSGMVTP and QQYQPNSQLQ. The span at 143 to 169 shows a compositional bias: low complexity; the sequence is IIKKSSLSTTPNNINNNNNNNNNTNTI. Polar residues predominate over residues 175-185; sequence GGNNSAPTPTY. Residues 323–359 show a composition bias toward low complexity; it reads TTSSTSTSSSATSTTSSSTSSTTTTSSTSNSSTPGST.

This is an uncharacterized protein from Dictyostelium discoideum (Social amoeba).